A 183-amino-acid chain; its full sequence is Inner membrane-spanning protein YciB (183 aa).

Transmembrane regions (helical) follow at residues 10–30 (LVIF…GALI), 50–70 (MHLI…VFHD), 72–92 (AFIK…LAVS), 118–138 (VTWY…YVAF), and 148–168 (FKVF…VIYL).

This sequence belongs to the YciB family.

It is found in the cell inner membrane. Plays a role in cell envelope biogenesis, maintenance of cell envelope integrity and membrane homeostasis. The sequence is that of Inner membrane-spanning protein YciB from Shewanella sediminis (strain HAW-EB3).